Consider the following 232-residue polypeptide: MELPNRYSDLFVTEKARDFWCFTRNSMLYYMLLRSRNLNNILDEYIQCMNQFCGFYSMRIPKNKYNDQILTYSYPHLRSFEEICLDNVDKNYISTGDFKEMRIFYEQLLKFVDKCIGRKYKYGHKFNLIENNKIHQIAKEKTSKLLDKCPYNNVYVKIPKNVFNTEQYKEKNIVNTRYINDKNNIILMFNNNHNKFTFLTLWNITECIDSFSYFRIVKCIDQDDTVSIEYID.

This is an uncharacterized protein from Acanthamoeba polyphaga (Amoeba).